An 875-amino-acid polypeptide reads, in one-letter code: Alanine--tRNA ligase (875 aa).

Histidine 564, histidine 568, cysteine 666, and histidine 670 together coordinate Zn(2+).

It belongs to the class-II aminoacyl-tRNA synthetase family. Homotetramer. Requires Zn(2+) as cofactor.

The protein localises to the cytoplasm. The catalysed reaction is tRNA(Ala) + L-alanine + ATP = L-alanyl-tRNA(Ala) + AMP + diphosphate. Functionally, catalyzes the attachment of alanine to tRNA(Ala) in a two-step reaction: alanine is first activated by ATP to form Ala-AMP and then transferred to the acceptor end of tRNA(Ala). Also edits incorrectly charged Ser-tRNA(Ala) and Gly-tRNA(Ala) via its editing domain. The protein is Alanine--tRNA ligase of Enterobacter sp. (strain 638).